The sequence spans 701 residues: ER-retained PMA1-suppressing protein 1 (701 aa).

Residues 1-27 form the signal peptide; the sequence is MKMNLKRLVVTFFSCITFLLKFTIAAA. The 115-residue stretch at 28 to 142 folds into the Thioredoxin 1 domain; sequence EPPEGFPEPL…LIAFARRESM (115 aa). C60 and C63 form a disulfide bridge. N85 carries N-linked (GlcNAc...) asparagine glycosylation. C200 and C203 are oxidised to a cystine. N264, N299, and N370 each carry an N-linked (GlcNAc...) asparagine glycan. In terms of domain architecture, Thioredoxin 2 spans 408–446; sequence PTFFMFKDGDPISYVFPGYSTTEMRNIDAIMDWVKKYSN. A helical membrane pass occupies residues 646–666; sequence IIHGNGMPGYLIVIVLFIAIL.

Belongs to the protein disulfide isomerase family. Interacts with mutated PMA1-D378N but not wild type PMA1. Interacts with EUG1, KAR2, MPD1 and PDI1.

It is found in the endoplasmic reticulum membrane. It carries out the reaction Catalyzes the rearrangement of -S-S- bonds in proteins.. Functionally, acts as a membrane-bound chaperone in endoplasmic reticulum quality control. Probably facilitates presentation of substrate to membrane-bound components of the degradation machinery. This chain is ER-retained PMA1-suppressing protein 1 (EPS1), found in Saccharomyces cerevisiae (strain ATCC 204508 / S288c) (Baker's yeast).